A 170-amino-acid chain; its full sequence is Photosystem II extrinsic protein V (170 aa).

A signal peptide spans 1–33 (MASLFASLGRSLIKLLIVLPVIIGLSISSPAMA). The heme c site is built by cysteine 70, cysteine 73, histidine 74, and histidine 125.

It belongs to the cytochrome c family. PsbV subfamily. As to quaternary structure, PSII is composed of 1 copy each of membrane proteins PsbA, PsbB, PsbC, PsbD, PsbE, PsbF, PsbH, PsbI, PsbJ, PsbK, PsbL, PsbM, PsbT, PsbX, PsbY, Psb30/Ycf12, peripheral proteins PsbO, CyanoQ (PsbQ), PsbU, PsbV and a large number of cofactors. It forms dimeric complexes. Requires heme c as cofactor.

The protein resides in the cellular thylakoid membrane. Functionally, one of the extrinsic, lumenal subunits of photosystem II (PSII). PSII is a light-driven water plastoquinone oxidoreductase, using light energy to abstract electrons from H(2)O, generating a proton gradient subsequently used for ATP formation. The extrinsic proteins stabilize the structure of photosystem II oxygen-evolving complex (OEC), the ion environment of oxygen evolution and protect the OEC against heat-induced inactivation. Low-potential cytochrome c that plays a role in the OEC of PSII. The sequence is that of Photosystem II extrinsic protein V from Prochlorococcus marinus (strain MIT 9313).